The primary structure comprises 176 residues: ATP-dependent protease subunit HslV (176 aa).

The active site involves threonine 2. Residues glycine 157, cysteine 160, and threonine 163 each coordinate Na(+).

Belongs to the peptidase T1B family. HslV subfamily. In terms of assembly, a double ring-shaped homohexamer of HslV is capped on each side by a ring-shaped HslU homohexamer. The assembly of the HslU/HslV complex is dependent on binding of ATP.

It localises to the cytoplasm. The enzyme catalyses ATP-dependent cleavage of peptide bonds with broad specificity.. Its activity is regulated as follows. Allosterically activated by HslU binding. Functionally, protease subunit of a proteasome-like degradation complex believed to be a general protein degrading machinery. This is ATP-dependent protease subunit HslV from Klebsiella pneumoniae (strain 342).